A 386-amino-acid chain; its full sequence is S-adenosylmethionine synthase (386 aa).

His-16 serves as a coordination point for ATP. Asp-18 contacts Mg(2+). Glu-44 provides a ligand contact to K(+). 2 residues coordinate L-methionine: Glu-57 and Gln-100. The segment at 100–110 (QSPDINVGVDQ) is flexible loop. Residues 164 to 166 (DGK), 231 to 232 (RF), Asp-240, 246 to 247 (RK), Ala-263, and Lys-267 contribute to the ATP site. Asp-240 serves as a coordination point for L-methionine. Lys-271 lines the L-methionine pocket.

Belongs to the AdoMet synthase family. As to quaternary structure, homotetramer; dimer of dimers. Mg(2+) is required as a cofactor. Requires K(+) as cofactor.

Its subcellular location is the cytoplasm. The catalysed reaction is L-methionine + ATP + H2O = S-adenosyl-L-methionine + phosphate + diphosphate. The protein operates within amino-acid biosynthesis; S-adenosyl-L-methionine biosynthesis; S-adenosyl-L-methionine from L-methionine: step 1/1. Functionally, catalyzes the formation of S-adenosylmethionine (AdoMet) from methionine and ATP. The overall synthetic reaction is composed of two sequential steps, AdoMet formation and the subsequent tripolyphosphate hydrolysis which occurs prior to release of AdoMet from the enzyme. This chain is S-adenosylmethionine synthase, found in Sulfurovum sp. (strain NBC37-1).